The sequence spans 773 residues: Photosystem I P700 chlorophyll a apoprotein A1 (773 aa).

Residues 1–27 form a disordered region; the sequence is MTISPPERGEKAKGAAPTPYDQPVDRD. The next 8 helical transmembrane spans lie at 80–103, 166–189, 205–229, 315–333, 375–398, 414–440, 462–484, and 564–582; these read IFSAHFGHLAVVFIWMSAAFFHGA, LMALAIGGVIMAALMLHGGIYHYH, LQHHQIALIGLGSIAWAGHLIHIGA, ISHHHLAFGVFAIFGGHMW, WHGQLSINLAMVGSASIVVAHHMY, LGLFTHHMWIGGLFICGAAAHAGIAMI, AIISHLNWVCMWLGFHSFGLYIH, and LMIHHVHAFTIHVTLLILL. Residues Cys606 and Cys615 each coordinate [4Fe-4S] cluster. 2 helical membrane passes run 622 to 643 and 687 to 709; these read HVFLGLFWMYNSLSVVIFHFSW and ISMYGLMFLGAHFVWAFSLMFLF. Position 698 (His698) interacts with divinylchlorophyll a'. Divinyl chlorophyll a is bound by residues Met706 and Tyr714. A phylloquinone-binding site is contributed by Trp715. A helical transmembrane segment spans residues 747-767; it reads AVGVAHFLLGGIATTWAFFHA.

This sequence belongs to the PsaA/PsaB family. As to quaternary structure, the PsaA/B heterodimer binds the P700 divinyl chlorophyll special pair and subsequent electron acceptors. PSI consists of a core antenna complex that captures photons, and an electron transfer chain that converts photonic excitation into a charge separation. The cyanobacterial PSI reaction center is composed of one copy each of PsaA,B,C,D,E,F,I,J,K,L,M and X, and forms trimeric complexes. Requires PSI electron transfer chain: 5 divinyl chlorophyll a, 1 divinyl chlorophyll a', 2 phylloquinones and 3 4Fe-4S clusters. PSI core antenna: 90 divinyl chlorophyll a, 22 carotenoids, 3 phospholipids and 1 galactolipid. P700 is a divinyl chlorophyll a/divinyl chlorophyll a' dimer, A0 is one or more divinylchlorophyll a, A1 is one or both phylloquinones and FX is a shared 4Fe-4S iron-sulfur center. as cofactor.

It is found in the cellular thylakoid membrane. The catalysed reaction is reduced [plastocyanin] + hnu + oxidized [2Fe-2S]-[ferredoxin] = oxidized [plastocyanin] + reduced [2Fe-2S]-[ferredoxin]. Functionally, psaA and PsaB bind P700, the primary electron donor of photosystem I (PSI), as well as the electron acceptors A0, A1 and FX. PSI is a plastocyanin/cytochrome c6-ferredoxin oxidoreductase, converting photonic excitation into a charge separation, which transfers an electron from the donor P700 chlorophyll pair to the spectroscopically characterized acceptors A0, A1, FX, FA and FB in turn. Oxidized P700 is reduced on the lumenal side of the thylakoid membrane by plastocyanin or cytochrome c6. The protein is Photosystem I P700 chlorophyll a apoprotein A1 of Prochlorococcus marinus (strain SARG / CCMP1375 / SS120).